A 163-amino-acid polypeptide reads, in one-letter code: Transcription antitermination protein NusB (163 aa).

It belongs to the NusB family.

Involved in transcription antitermination. Required for transcription of ribosomal RNA (rRNA) genes. Binds specifically to the boxA antiterminator sequence of the ribosomal RNA (rrn) operons. In Mycolicibacterium vanbaalenii (strain DSM 7251 / JCM 13017 / BCRC 16820 / KCTC 9966 / NRRL B-24157 / PYR-1) (Mycobacterium vanbaalenii), this protein is Transcription antitermination protein NusB.